The chain runs to 802 residues: Endoplasmin (802 aa).

The first 21 residues, 1-21 (MRVLWVLGLCCVLLTFGFVRA), serve as a signal peptide directing secretion. The short motif at 42-44 (SRT) is the SRT pseudosubstrate motif element. The N-linked (GlcNAc...) asparagine glycan is linked to Asn-62. Position 64 is a phosphoserine (Ser-64). Asn-107 carries N-linked (GlcNAc...) asparagine glycosylation. Residues Asn-107, Asp-149, and Asn-162 each contribute to the ATP site. An N6-(2-hydroxyisobutyryl)lysine modification is found at Lys-168. Ser-172 carries the phosphoserine modification. Phe-199 serves as a coordination point for ATP. Residue Asn-217 is glycosylated (N-linked (GlcNAc...) asparagine). Acidic residues predominate over residues 290–317 (EEPLEEDEAAKEEKEESDDEAAVEEEEE). Residues 290 to 323 (EEPLEEDEAAKEEKEESDDEAAVEEEEEEKKPKT) are disordered. Residues Ser-306 and Ser-403 each carry the phosphoserine modification. An N6-succinyllysine modification is found at Lys-404. A glycan (N-linked (GlcNAc...) asparagine) is linked at Asn-445. Residue Ser-447 is modified to Phosphoserine. At Lys-479 the chain carries N6-acetyllysine. Residues Asn-481 and Asn-502 are each glycosylated (N-linked (GlcNAc...) asparagine). Lys-633 is subject to N6-succinyllysine. The disordered stretch occupies residues 749-802 (IDPEAQVEEEPEEEPEDTSEDAEDSEQDEGEEMDAGTEEEEEETEKESTEKDEL). Acidic residues predominate over residues 753-793 (AQVEEEPEEEPEDTSEDAEDSEQDEGEEMDAGTEEEEEETE). Residue Thr-785 is modified to Phosphothreonine. Residues 799–802 (KDEL) carry the Prevents secretion from ER motif.

It belongs to the heat shock protein 90 family. In terms of assembly, homodimer; disulfide-linked. Component of an EIF2 complex at least composed of CELF1/CUGBP1, CALR, CALR3, EIF2S1, EIF2S2, HSP90B1 and HSPA5. Part of a large chaperone multiprotein complex comprising DNAJB11, HSP90B1, HSPA5, HYOU, PDIA2, PDIA4, PDIA6, PPIB, SDF2L1, UGGT1 and very small amounts of ERP29, but not, or at very low levels, CALR nor CANX. Hyperglycosylated form interacts with OS9; promoting its degradation by the endoplasmic reticulum associated degradation (ERAD). Interacts with AIMP1; regulates its retention in the endoplasmic reticulum. Interacts with CNPY3; this interaction is disrupted in the presence of ATP. Interacts with TLR4, TLR9 and TLR11, but not with TLR3. Interacts with MZB1 in a calcium-dependent manner. Interacts with METTL23. Interacts with IL1B; the interaction facilitates cargo translocation into the ERGIC. Interacts with EIF2AK3. In terms of processing, phosphorylated by CK2. N-glycosylated cotranslationally at Asn-217 by STT3A-containing OST-A complex: this glycosylation is constitutive. In response to various stress, 5 additional facultative sites (Asn-62, Asn-107, Asn-445, Asn-481 and Asn-502) can be glycosylated post-translationally by STT3B-containing OST-B complex, leading to a hyperglycosylated form that is degraded by the ER-associated degradation (ERAD) pathway. In normal conditions, the OST-A complex together with CCDC134 prevent glycosylation at facultative sites during protein folding, thereby preventing hyperglycosylation. Mechanistically, nascent HSP90B1 is tethered during translation to a specialized CCDC134-containing translocon that forms a microenvironment for its folding, in which STT3A associates with the SRT pseudosubstrate motif, and prevents access to facultative glycosylation sites until folding is completed, rendering its facultative sites inaccessible to the OST-B complex.

Its subcellular location is the endoplasmic reticulum lumen. The protein resides in the sarcoplasmic reticulum lumen. The protein localises to the melanosome. The enzyme catalyses ATP + H2O = ADP + phosphate + H(+). Its function is as follows. ATP-dependent chaperone involved in the processing of proteins in the endoplasmic reticulum, regulating their transport. Together with MESD, acts as a modulator of the Wnt pathway by promoting the folding of LRP6, a coreceptor of the canonical Wnt pathway. When associated with CNPY3, required for proper folding of Toll-like receptors. Promotes folding and trafficking of TLR4 to the cell surface. May participate in the unfolding of cytosolic leaderless cargos (lacking the secretion signal sequence) such as the interleukin 1/IL-1 to facilitate their translocation into the ERGIC (endoplasmic reticulum-Golgi intermediate compartment) and secretion; the translocation process is mediated by the cargo receptor TMED10. The polypeptide is Endoplasmin (Hsp90b1) (Mus musculus (Mouse)).